The following is a 321-amino-acid chain: Nodulation protein D 1 (321 aa).

The HTH lysR-type domain maps to 6–63; it reads LDLNLLVALDALMTERKLTAAARSINLSQPAMSAAITRLRTYFRDELFTMNGRELVPT. The segment at residues 23–42 is a DNA-binding region (H-T-H motif); that stretch reads LTAAARSINLSQPAMSAAIT.

It belongs to the LysR transcriptional regulatory family.

Functionally, nodD regulates the expression of the nodABCFE genes which encode other nodulation proteins. NodD is also a negative regulator of its own expression. Binds flavonoids as inducers. The protein is Nodulation protein D 1 (nodD1) of Bradyrhizobium japonicum.